The chain runs to 497 residues: Delayed-rectifier potassium channel regulatory subunit KCNS1 (497 aa).

Residues 1–186 (MVSEFPGPGS…LTMENPGYSL (186 aa)) lie on the Cytoplasmic side of the membrane. A helical transmembrane segment spans residues 187–208 (PSKLFSCVSIGVVLASIAAMCI). Topologically, residues 209–239 (HSLPEYQAREAAAAVAAVAAGRSAEEVRDDP) are extracellular. The chain crosses the membrane as a helical span at residues 240–262 (VLRRLEYFCIAWFSFEVSSRLLL). Residues 263 to 273 (APSTRNFFCHP) lie on the Cytoplasmic side of the membrane. The helical transmembrane segment at 274 to 291 (LNLIDIVSVLPFYLTLLA) threads the bilayer. The Extracellular segment spans residues 292–309 (GAALGDQRGASGEELGDL). Residues 310-330 (GKVVQVFRLMRIFRVLKLARH) form a helical; Voltage-sensor membrane-spanning segment. At 331-345 (STGLRSLGATLKHSY) the chain is on the cytoplasmic side. The helical transmembrane segment at 346–367 (REVGILLLYLAVGVSVFSGVAY) threads the bilayer. The Extracellular portion of the chain corresponds to 368–379 (TAEEENEGFHTI). The helical intramembrane region spans 380-391 (PACWWWGTVSMT). The Selectivity filter signature appears at 392-397 (TVGYGD). An intramembrane segment occupies 392-399 (TVGYGDVV). The Extracellular segment spans residues 400 to 406 (PETVGGK). Residues 407–435 (LAASGCILGGILVVALPITIIFNKFSHFY) form a helical membrane-spanning segment. Residues 436–497 (RRQKALEAAV…PREPAKSHSY (62 aa)) are Cytoplasmic-facing. Residues 464–497 (SDVSLETSRDTSQEGRSTDLETQAPREPAKSHSY) form a disordered region. The span at 470–482 (TSRDTSQEGRSTD) shows a compositional bias: basic and acidic residues.

This sequence belongs to the potassium channel family. S (TC 1.A.1.2) subfamily. Kv9.1/KCNS1 sub-subfamily. Heterotetramer with KCNB1 and KCNB2. Does not form homomultimers. In terms of tissue distribution, detected in brain, but not in the other tissues tested. The highest levels of expression are in olfactory bulb, cerebral cortex, hippocampus, habenula, basolateral amygdaloid nuclei and cerebellum.

It localises to the cell membrane. Potassium channel regulatory subunit that modulate the delayed rectifier voltage-gated potassium channel activity of KCNB1 and KCNB2 by altering their kinetics, expression levels, and shifting the half-inactivation potential to more polarized values. While it does not form functional channels on its own, it can form functional heterotetrameric channels with KCNB1 and KCNB2. Each regulatory subunit has unique regulatory properties that can lead to extensive inhibition, significant changes in kinetics, and/or substantial shifts in the voltage dependencies of the inactivation process. The sequence is that of Delayed-rectifier potassium channel regulatory subunit KCNS1 from Mus musculus (Mouse).